A 388-amino-acid polypeptide reads, in one-letter code: (S)-8-oxocitronellyl enol synthase (388 aa).

NADP(+) is bound by residues T38–I40, R66–R67, D84–V85, S108–W109, and Q142. Residues K146 and Y178 contribute to the active site. Substrate-binding residues include K146 and Y178. NADP(+)-binding positions include Y178, V204, and S211–M213. Residue S349 coordinates substrate.

It belongs to the short-chain dehydrogenases/reductases (SDR) family. Highly divergent. In terms of assembly, homodimer. Expressed in internal phloem-associated parenchyma (IPAP) cells.

It localises to the cytoplasm. Its subcellular location is the cytosol. The enzyme catalyses (S)-8-oxocitronellyl enol + NADP(+) = (6E)-8-oxogeranial + NADPH + H(+). It carries out the reaction (S)-8-oxocitronellyl enol + NAD(+) = (6E)-8-oxogeranial + NADH + H(+). In terms of biological role, iridoid synthase that catalyzes the first step in generation of the iridoid ring scaffold using the linear monoterpene (6E)-8-oxogeranial as substrate. Iridoids comprise a large family of distinctive bicyclic monoterpenes that possess a wide range of pharmacological activities, including anticancer, anti-inflammatory, antifungal and antibacterial activities. The sequence is that of (S)-8-oxocitronellyl enol synthase from Catharanthus roseus (Madagascar periwinkle).